A 254-amino-acid chain; its full sequence is 3-deoxy-manno-octulosonate cytidylyltransferase (254 aa).

The protein belongs to the KdsB family.

Its subcellular location is the cytoplasm. The enzyme catalyses 3-deoxy-alpha-D-manno-oct-2-ulosonate + CTP = CMP-3-deoxy-beta-D-manno-octulosonate + diphosphate. The protein operates within nucleotide-sugar biosynthesis; CMP-3-deoxy-D-manno-octulosonate biosynthesis; CMP-3-deoxy-D-manno-octulosonate from 3-deoxy-D-manno-octulosonate and CTP: step 1/1. It functions in the pathway bacterial outer membrane biogenesis; lipopolysaccharide biosynthesis. Its function is as follows. Activates KDO (a required 8-carbon sugar) for incorporation into bacterial lipopolysaccharide in Gram-negative bacteria. The chain is 3-deoxy-manno-octulosonate cytidylyltransferase from Bordetella petrii (strain ATCC BAA-461 / DSM 12804 / CCUG 43448).